The chain runs to 881 residues: MNSAEIMADLSNHTPMMQQYLKVKKDYQHALLFYRMGDFYELFFEDAHLAAKLLGITLTHRGKANGNPIPMAGVPYHSAEGYLARLVKAGRTVAICEQVGEVTGKGPVERKVVRILTPGTLTDDALLTSYQSSNLVALCIHQNQIGFALLDLSAGIFKVQQQDYKPEQLPIELARLMPSEILIDEDLVDPNIIEQIKKHLDCPVTKRPNVDFNLNNAQKTLCDQFSVSTLSGFGLDPLPLAKAAAAALIHYAKETQKTALPHIRSILLEQSSDFIALDPITRRNLEIIEPLFEHGTSLFQLVNDCQTAMGGRLLSRTLMQPVRDTALLDARLDAIEQLIQGYHESPVRLVLKEIGDIERVLSRVALGSARPRDLVQLRHACAQIPFLRNALAPVVQAKKSKLLGQLDQELGDFKSLHQHLMAAIVENPPVLLRDGNVIAEGYDAELDELRQIRDHAGQFLIDLEIKERERTGISTLKIGYNRVSGYYIELTRAQAEQAPADYIRRQTLKNAERYITPELKSFEDKVLSSESRALAREKALFEALLENLRENIAHLQMMSSAIAQIDVIANFAHQARLNNWARPEFTPETGIKIQGGRHPVVEALSKAPFTPNDTFLDVQHRMAIITGPNMGGKSTFMRQTALISLLAYCGSYVPARAAKLGPIDRIFTRIGSADDLSTGKSTFMVEMTETSQILHHATNQSLVLMDEVGRGTSTYDGLSLAWACVVDLTKRVKCLCLFATHYFELTELGSEPGIDNYHVTAQELNGNLILLHKVQQGPASQSHGLQVAKLAGIPANVIKEAQKRLRILEKQQQQHLQTSVQSDLFATLDSEVTPSTQVIEKVIEVEVSSPALDLLKQIEVDNLTPRQALEQLYELKAALNS.

Position 627–634 (627–634) interacts with ATP; it reads GPNMGGKS.

The protein belongs to the DNA mismatch repair MutS family.

Its function is as follows. This protein is involved in the repair of mismatches in DNA. It is possible that it carries out the mismatch recognition step. This protein has a weak ATPase activity. In Acinetobacter baumannii (strain AB307-0294), this protein is DNA mismatch repair protein MutS.